The chain runs to 152 residues: MYRGCLAIPYMRWSPWRNWSVAAIRYRRLDDGKPKYMTMPGDKPRLYNTVALTRYSRDMAITEGEIDAITAELCGIPTVGVPGAQMWKPHFRELFLGYRNVNILADGDEPGMEFAKSVAKTLPNARIIPMPEGEDVNSLVTSQGKDALLERI.

The Toprim domain maps to 57 to 137 (RDMAITEGEI…IPMPEGEDVN (81 aa)).

This chain is Gene 57 protein (57), found in Mycobacterium (Mycobacteriophage D29).